A 202-amino-acid polypeptide reads, in one-letter code: Probable nicotinate-nucleotide adenylyltransferase (202 aa).

It belongs to the NadD family.

It carries out the reaction nicotinate beta-D-ribonucleotide + ATP + H(+) = deamido-NAD(+) + diphosphate. It functions in the pathway cofactor biosynthesis; NAD(+) biosynthesis; deamido-NAD(+) from nicotinate D-ribonucleotide: step 1/1. Its function is as follows. Catalyzes the reversible adenylation of nicotinate mononucleotide (NaMN) to nicotinic acid adenine dinucleotide (NaAD). The polypeptide is Probable nicotinate-nucleotide adenylyltransferase (Clostridium perfringens (strain ATCC 13124 / DSM 756 / JCM 1290 / NCIMB 6125 / NCTC 8237 / Type A)).